A 315-amino-acid chain; its full sequence is Ribosomal RNA small subunit methyltransferase H (315 aa).

Residues glycine 33–histidine 35, aspartate 52, phenylalanine 84, aspartate 106, and glutamine 113 each bind S-adenosyl-L-methionine.

It belongs to the methyltransferase superfamily. RsmH family.

The protein resides in the cytoplasm. It catalyses the reaction cytidine(1402) in 16S rRNA + S-adenosyl-L-methionine = N(4)-methylcytidine(1402) in 16S rRNA + S-adenosyl-L-homocysteine + H(+). Specifically methylates the N4 position of cytidine in position 1402 (C1402) of 16S rRNA. The chain is Ribosomal RNA small subunit methyltransferase H from Lactobacillus acidophilus (strain ATCC 700396 / NCK56 / N2 / NCFM).